A 1165-amino-acid chain; its full sequence is Serine/threonine-protein kinase/endoribonuclease ireA (1165 aa).

A signal peptide spans 1 to 27 (MRWRLPGARTTLPASVALLLLPILVAP). Over 28-504 (QQLQEHDDLP…STIIRKGWDN (477 aa)) the chain is Lumenal. N-linked (GlcNAc...) asparagine glycosylation is present at Asn152. Residues 505 to 525 (AVDIFVTILLLFFGAFIYFNS) traverse the membrane as a helical segment. Residues 526 to 1165 (HNIQELAKQK…RFKRYFTPVE (640 aa)) are Cytoplasmic-facing. Positions 547-668 (QPPLSTPSTP…SEGESKDQAD (122 aa)) are disordered. Basic and acidic residues-rich tracts occupy residues 591–600 (ATPKPKRDRS) and 611–620 (KIREPSRGPD). Residues 637–655 (PKKKARRGRRGGKNHRRGK) show a composition bias toward basic residues. A compositionally biased stretch (basic and acidic residues) spans 656–668 (KPDSEGESKDQAD). Positions 711–1026 (VFSDVVLGHG…ASAVLMHPFF (316 aa)) constitute a Protein kinase domain. ATP-binding positions include 717–725 (LGHGSHGTV) and Lys739. Residue Asp832 is the Proton acceptor of the active site. Residues 899 to 919 (AIQGGESQHTESSEPAVVDPQ) are disordered. The KEN domain maps to 1029 to 1163 (PSDRLSFLCD…IDRFKRYFTP (135 aa)).

It belongs to the protein kinase superfamily. Ser/Thr protein kinase family. Homodimer; in response to the accumulation of unfolded proteins. Requires Mg(2+) as cofactor. In terms of processing, autophosphorylated mainly on serine residues.

The protein localises to the membrane. It carries out the reaction L-seryl-[protein] + ATP = O-phospho-L-seryl-[protein] + ADP + H(+). The enzyme catalyses L-threonyl-[protein] + ATP = O-phospho-L-threonyl-[protein] + ADP + H(+). Its activity is regulated as follows. 8-formyl-7-hydroxy-4-methylcoumarin inhibits the endonuclease activity and prebvent the splicing if the hacA mRNA. The kinase domain is activated by trans-autophosphorylation. Kinase activity is required for activation of the endoribonuclease domain. Senses unfolded proteins in the lumen of the endoplasmic reticulum (ER) via its N-terminal domain which leads to enzyme auto-activation. The active endoribonuclease domain responds by cleaving an intron from the downstream cytoplasmic mRNA hacA, allowing for the translation of a transcription factor that coordinates a series of adaptive responses that are collectively known as the unfolded protein response (UPR). In the absence of ER stress, ireA controls dual signaling circuits that are both hacA-dependent and hacA-independent and which contribute to the expression of traits that are essential for virulence. In Aspergillus fumigatus (strain ATCC MYA-4609 / CBS 101355 / FGSC A1100 / Af293) (Neosartorya fumigata), this protein is Serine/threonine-protein kinase/endoribonuclease ireA.